We begin with the raw amino-acid sequence, 84 residues long: RQC P-site tRNA stabilizing factor (84 aa).

The S4 RNA-binding domain occupies 1–64 (MRIDKFLQSV…IEEYTILQIP (64 aa)).

Belongs to the RqcP family. As to quaternary structure, associates with stalled 50S ribosomal subunits. Binds to RqcH, 23S rRNA and the P-site tRNA. Does not require RqcH for association with 50S subunits.

Key component of the ribosome quality control system (RQC), a ribosome-associated complex that mediates the extraction of incompletely synthesized nascent chains from stalled ribosomes and their subsequent degradation. RqcH recruits Ala-charged tRNA, and with RqcP directs the elongation of stalled nascent chains on 50S ribosomal subunits, leading to non-templated C-terminal alanine extensions (Ala tail). The Ala tail promotes nascent chain degradation. RqcP is associated with the translocation-like movement of the peptidyl-tRNA from the A-site into the P-site. This Helicobacter pylori (strain ATCC 700392 / 26695) (Campylobacter pylori) protein is RQC P-site tRNA stabilizing factor.